Here is a 154-residue protein sequence, read N- to C-terminus: Large ribosomal subunit protein uL13 (154 aa).

Belongs to the universal ribosomal protein uL13 family. In terms of assembly, part of the 50S ribosomal subunit.

Functionally, this protein is one of the early assembly proteins of the 50S ribosomal subunit, although it is not seen to bind rRNA by itself. It is important during the early stages of 50S assembly. This Sinorhizobium medicae (strain WSM419) (Ensifer medicae) protein is Large ribosomal subunit protein uL13.